Here is a 137-residue protein sequence, read N- to C-terminus: Putative pre-16S rRNA nuclease (137 aa).

This sequence belongs to the YqgF nuclease family.

Its subcellular location is the cytoplasm. Could be a nuclease involved in processing of the 5'-end of pre-16S rRNA. The sequence is that of Putative pre-16S rRNA nuclease from Clostridium botulinum (strain Alaska E43 / Type E3).